The following is a 770-amino-acid chain: ATP-dependent RNA helicase HCA4 (770 aa).

The short motif at 41–69 is the Q motif element; that stretch reads KFFKDLPISDPTLKGLRESSFIKLTEIQA. The Helicase ATP-binding domain occupies 72 to 246; sequence IPVSLQGHDV…RLSLTDYKTV (175 aa). 85 to 92 provides a ligand contact to ATP; it reads AKTGSGKT. The short motif at 194 to 197 is the DEAD box element; the sequence is DEAD. One can recognise a Helicase C-terminal domain in the interval 278 to 437; it reads KLDILFSFIK…SIKPQLQSLL (160 aa). Phosphoserine is present on residues Ser692, Ser710, Ser714, and Ser743. The disordered stretch occupies residues 705–724; that stretch reads GTGNLSDDMSDGDMPDSEGH.

Belongs to the DEAD box helicase family. DDX10/DBP4 subfamily. Interacts with the U3 and U14 snoRNAs. Associates with pre-ribosomal complexes.

It localises to the nucleus. The protein localises to the nucleolus. The catalysed reaction is ATP + H2O = ADP + phosphate + H(+). ATP-dependent RNA helicase required for ribosome biogenesis. Involved in the release of U14 snoRNA in pre-ribosomal complexes. Required for pre-rRNA cleavage at site A2. This is ATP-dependent RNA helicase HCA4 (HCA4) from Saccharomyces cerevisiae (strain ATCC 204508 / S288c) (Baker's yeast).